Reading from the N-terminus, the 434-residue chain is Enolase (434 aa).

Gln163 lines the (2R)-2-phosphoglycerate pocket. Glu205 acts as the Proton donor in catalysis. Mg(2+)-binding residues include Asp242, Glu291, and Asp318. 4 residues coordinate (2R)-2-phosphoglycerate: Lys343, Arg372, Ser373, and Lys394. The active-site Proton acceptor is the Lys343.

Belongs to the enolase family. Mg(2+) is required as a cofactor.

Its subcellular location is the cytoplasm. The protein resides in the secreted. It is found in the cell surface. It catalyses the reaction (2R)-2-phosphoglycerate = phosphoenolpyruvate + H2O. Its pathway is carbohydrate degradation; glycolysis; pyruvate from D-glyceraldehyde 3-phosphate: step 4/5. Functionally, catalyzes the reversible conversion of 2-phosphoglycerate (2-PG) into phosphoenolpyruvate (PEP). It is essential for the degradation of carbohydrates via glycolysis. The chain is Enolase from Streptococcus gordonii (strain Challis / ATCC 35105 / BCRC 15272 / CH1 / DL1 / V288).